Here is a 131-residue protein sequence, read N- to C-terminus: Histone H2B.1 (131 aa).

Residues 1-20 show a composition bias toward basic and acidic residues; the sequence is MAPPKAEKKPASKAPAEKKP. The interval 1 to 39 is disordered; it reads MAPPKAEKKPASKAPAEKKPAAKKTASATDSKKRTKTRK. N6-acetyllysine; alternate occurs at positions 8 and 9. Glycyl lysine isopeptide (Lys-Gly) (interchain with G-Cter in SUMO); alternate cross-links involve residues Lys8 and Lys9. Ser12 is subject to Phosphoserine. Lys13 carries the post-translational modification N6-acetyllysine. An N6-acetyllysine; alternate modification is found at Lys18. A Glycyl lysine isopeptide (Lys-Gly) (interchain with G-Cter in SUMO); alternate cross-link involves residue Lys18. A Glycyl lysine isopeptide (Lys-Gly) (interchain with G-Cter in SUMO) cross-link involves residue Lys19. Lys125 participates in a covalent cross-link: Glycyl lysine isopeptide (Lys-Gly) (interchain with G-Cter in ubiquitin).

This sequence belongs to the histone H2B family. In terms of assembly, the nucleosome is a histone octamer containing two molecules each of H2A, H2B, H3 and H4 assembled in one H3-H4 heterotetramer and two H2A-H2B heterodimers. The octamer wraps approximately 147 bp of DNA. Monoubiquitinated to form H2BK123ub1. H2BK123ub1 gives a specific tag for epigenetic transcriptional activation and is also prerequisite for H3K4me and H3K79me formation. H2BK123ub1 also modulates the formation of double-strand breaks during meiosis and is a prerequisite for DNA-damage checkpoint activation. Post-translationally, phosphorylated by STE20 to form H2BS10ph during progression through meiotic prophase. May be correlated with chromosome condensation. In terms of processing, acetylated by GCN5 to form H2BK11ac and H2BK16ac. H2BK16ac can also be formed by ESA1. Acetylation of N-terminal lysines and particularly formation of H2BK11acK16ac has a positive effect on transcription. Sumoylation to form H2BK6su or H2BK7su, and probably also H2BK16su or H2BK17su, occurs preferentially near the telomeres and represses gene transcription.

It localises to the nucleus. Its subcellular location is the chromosome. Functionally, core component of nucleosome. Nucleosomes wrap and compact DNA into chromatin, limiting DNA accessibility to the cellular machineries which require DNA as a template. Histones thereby play a central role in transcription regulation, DNA repair, DNA replication and chromosomal stability. DNA accessibility is regulated via a complex set of post-translational modifications of histones, also called histone code, and nucleosome remodeling. In Scheffersomyces stipitis (strain ATCC 58785 / CBS 6054 / NBRC 10063 / NRRL Y-11545) (Yeast), this protein is Histone H2B.1 (HTB1).